The primary structure comprises 469 residues: Aspartyl/glutamyl-tRNA(Asn/Gln) amidotransferase subunit B (469 aa).

The protein belongs to the GatB/GatE family. GatB subfamily. In terms of assembly, heterotrimer of A, B and C subunits.

The catalysed reaction is L-glutamyl-tRNA(Gln) + L-glutamine + ATP + H2O = L-glutaminyl-tRNA(Gln) + L-glutamate + ADP + phosphate + H(+). It catalyses the reaction L-aspartyl-tRNA(Asn) + L-glutamine + ATP + H2O = L-asparaginyl-tRNA(Asn) + L-glutamate + ADP + phosphate + 2 H(+). Allows the formation of correctly charged Asn-tRNA(Asn) or Gln-tRNA(Gln) through the transamidation of misacylated Asp-tRNA(Asn) or Glu-tRNA(Gln) in organisms which lack either or both of asparaginyl-tRNA or glutaminyl-tRNA synthetases. The reaction takes place in the presence of glutamine and ATP through an activated phospho-Asp-tRNA(Asn) or phospho-Glu-tRNA(Gln). This Methanococcus maripaludis (strain DSM 14266 / JCM 13030 / NBRC 101832 / S2 / LL) protein is Aspartyl/glutamyl-tRNA(Asn/Gln) amidotransferase subunit B.